The sequence spans 61 residues: uncharacterized protein (61 aa).

It is found in the mitochondrion. This is an uncharacterized protein from Marchantia polymorpha (Common liverwort).